Consider the following 475-residue polypeptide: U3 small nucleolar RNA-interacting protein 2 (475 aa).

The interval 1 to 75 (MSATAAARKR…EEEEELEETA (75 aa)) is disordered. The Nuclear localization signal motif lies at 8 to 40 (RKRGKPASGAGAGAGAGKRRRKADSAGDRGKSK). R10 carries the post-translational modification Omega-N-methylarginine. 2 positions are modified to N6-acetyllysine: K12 and K25. Phosphoserine occurs at positions 50, 51, 53, and 57. Residues 65–74 (EEEEEELEET) are compositionally biased toward acidic residues. K113 participates in a covalent cross-link: Glycyl lysine isopeptide (Lys-Gly) (interchain with G-Cter in SUMO2). 7 WD repeats span residues 144-183 (GHQLSITCLVVTPDDSAIFSAAKDCSIIKWSVESGRKLHV), 197-236 (GHSSHVLCMAISSDGKYLASGDRSKLILIWEAQSCQHLYT), 239-278 (GHRDAVSGLAFRRGTHQLYSTSHDRSVKVWNVAENSYVET), 281-320 (GHQDAVAALDALSRECCVTAGGRDGTVRVWKIPEESQLVF), 322-360 (GHQGSIDCIHLINEEHMVSGADDGSVALWGLSKKRPLAL), 374-413 (EQPFWISSVAALLNTDLVATGSHSSCVRLWQCGEGFRQLD), and 419-460 (PLVG…NSVC).

It belongs to the WD repeat RRP9 family. As to quaternary structure, interacts specifically with the U3 small nucleolar RNA (U3 snoRNA). Binds a sub-fragment of the U3 snoRNA surrounding the B/C motif (3UBC). This association with the U3BC RNA is dependent on the binding of a protein called 15.5K to the box B/C motif. The association of the protein with the U3BC RNA was found to be also dependent on a conserved RNA structure that flanks the box B/C motif. Part of the small subunit (SSU) processome, composed of more than 70 proteins and the RNA chaperone small nucleolar RNA (snoRNA) U3. Acetylation at Lys-12 and Lys-25 by KAT2B/PCAF under stress impairs pre-rRNA processing. Deacetylation by SIRT7 enhances RRP9-binding to U3 snoRNA, which is a prerequisite for pre-rRNA processing.

Its subcellular location is the nucleus. The protein resides in the nucleolus. In terms of biological role, component of a nucleolar small nuclear ribonucleoprotein particle (snoRNP) thought to participate in the processing and modification of pre-ribosomal RNA (pre-rRNA). Part of the small subunit (SSU) processome, first precursor of the small eukaryotic ribosomal subunit. During the assembly of the SSU processome in the nucleolus, many ribosome biogenesis factors, an RNA chaperone and ribosomal proteins associate with the nascent pre-rRNA and work in concert to generate RNA folding, modifications, rearrangements and cleavage as well as targeted degradation of pre-ribosomal RNA by the RNA exosome. The protein is U3 small nucleolar RNA-interacting protein 2 of Homo sapiens (Human).